A 131-amino-acid chain; its full sequence is Meiotically up-regulated gene 115 protein (131 aa).

It localises to the mitochondrion. The protein resides in the nucleus. Functionally, has a role in meiosis. The protein is Meiotically up-regulated gene 115 protein (mug115) of Schizosaccharomyces pombe (strain 972 / ATCC 24843) (Fission yeast).